A 239-amino-acid chain; its full sequence is tRNA (guanine-N(1)-)-methyltransferase (239 aa).

S-adenosyl-L-methionine is bound by residues Gly-112 and Leu-131–Leu-136.

Belongs to the RNA methyltransferase TrmD family. As to quaternary structure, homodimer.

The protein resides in the cytoplasm. The catalysed reaction is guanosine(37) in tRNA + S-adenosyl-L-methionine = N(1)-methylguanosine(37) in tRNA + S-adenosyl-L-homocysteine + H(+). Functionally, specifically methylates guanosine-37 in various tRNAs. The polypeptide is tRNA (guanine-N(1)-)-methyltransferase (Clostridium tetani (strain Massachusetts / E88)).